Consider the following 137-residue polypeptide: Cellular retinoic acid-binding protein 1 (137 aa).

The short motif at 21–31 is the Nuclear localization signal element; that stretch reads KALGVNAMLRK. 132–134 is an all-trans-retinoate binding site; that stretch reads RIY.

The protein belongs to the calycin superfamily. Fatty-acid binding protein (FABP) family.

It is found in the cytoplasm. Functionally, cytosolic CRABPs may regulate the access of retinoic acid to the nuclear retinoic acid receptors. This Gallus gallus (Chicken) protein is Cellular retinoic acid-binding protein 1 (CRABP1).